The following is a 664-amino-acid chain: Glycine--tRNA ligase beta subunit (664 aa).

The protein belongs to the class-II aminoacyl-tRNA synthetase family. In terms of assembly, tetramer of two alpha and two beta subunits.

Its subcellular location is the cytoplasm. It catalyses the reaction tRNA(Gly) + glycine + ATP = glycyl-tRNA(Gly) + AMP + diphosphate. The polypeptide is Glycine--tRNA ligase beta subunit (glyS) (Aquifex aeolicus (strain VF5)).